Here is a 1778-residue protein sequence, read N- to C-terminus: Protein TIC 214 (1778 aa).

6 consecutive transmembrane segments (helical) span residues Ile-18–Gly-38, Phe-67–Leu-87, Pro-90–Asn-110, Val-132–Leu-152, Val-175–Ile-195, and Ile-226–Ile-246. The segment at Gly-1498–Glu-1520 is disordered.

It belongs to the TIC214 family. Part of the Tic complex.

It is found in the plastid. The protein resides in the chloroplast inner membrane. Its function is as follows. Involved in protein precursor import into chloroplasts. May be part of an intermediate translocation complex acting as a protein-conducting channel at the inner envelope. The polypeptide is Protein TIC 214 (Arabis hirsuta (Hairy rock-cress)).